The chain runs to 460 residues: 25S rRNA (cytosine-C(5))-methyltransferase rcm1 (460 aa).

S-adenosyl-L-methionine-binding positions include 223 to 229 (CAAPGNK), Glu246, Asp273, and Asp293. Cys350 (nucleophile) is an active-site residue. Residues 430–439 (KMYKNDDDTK) show a composition bias toward basic and acidic residues. Residues 430-460 (KMYKNDDDTKKRKRKKKKKEVKKKARIQGEE) form a disordered region. Residues 440–460 (KRKRKKKKKEVKKKARIQGEE) are compositionally biased toward basic residues.

The protein belongs to the class I-like SAM-binding methyltransferase superfamily. RsmB/NOP family. Interacts with trm112.

It is found in the nucleus. It localises to the nucleolus. It catalyses the reaction a cytidine in 25S rRNA + S-adenosyl-L-methionine = a 5-methylcytidine in 25S rRNA + S-adenosyl-L-homocysteine + H(+). Its function is as follows. S-adenosyl-L-methionine-dependent methyltransferase that specifically methylates the C(5) position of a cytosine in 25S rRNA. This is 25S rRNA (cytosine-C(5))-methyltransferase rcm1 (rcm1) from Schizosaccharomyces pombe (strain 972 / ATCC 24843) (Fission yeast).